A 419-amino-acid chain; its full sequence is MAQTITEKIFSQHVGRAVFAGEIIRCNIDMVIGNDITTPISIKAFEDSGATKLANPDGFSIVLDHFIPAKDIASANQARISRDFAKKYSLKNFFDEKDMGIEHALLPEKGLVVPGDVIIGADSHTCTHGALGAFSTGMGSTDLAFAMITGGNWFKVPESIKVNLSGKPSKYTTGKDIILEIIRLIGVDGALYKTLEFTGSTIEHLSIDDRFSMCNMAIEAGAKSGIVAYDETTKAFLADKNLAREPRIHYSDADASYVQILNIDVASLDPVIAYPFLPSNGHSVVQAQKDNIKIDQAFIGSCTNGRLSDLKVAAEILKGKRVHPDVRLIVTPGTQMILREANKLGYIDIIVDAGGVVSNPTCGACLGGYMGILGDNEVAISTTNRNFVGRMGSRSSKVYLANSAVAAISAIKGYITDPR.

[4Fe-4S] cluster is bound by residues Cys302, Cys362, and Cys365.

The protein belongs to the aconitase/IPM isomerase family. LeuC type 2 subfamily. As to quaternary structure, heterodimer of LeuC and LeuD. Requires [4Fe-4S] cluster as cofactor.

The enzyme catalyses (2R,3S)-3-isopropylmalate = (2S)-2-isopropylmalate. It functions in the pathway amino-acid biosynthesis; L-leucine biosynthesis; L-leucine from 3-methyl-2-oxobutanoate: step 2/4. Functionally, catalyzes the isomerization between 2-isopropylmalate and 3-isopropylmalate, via the formation of 2-isopropylmaleate. This Sulfurimonas denitrificans (strain ATCC 33889 / DSM 1251) (Thiomicrospira denitrificans (strain ATCC 33889 / DSM 1251)) protein is 3-isopropylmalate dehydratase large subunit.